The sequence spans 478 residues: JmjC domain-containing histone demethylation protein 1 (478 aa).

A PHD-type zinc finger spans residues 6-70 (VKCHFCKKDD…HVESFKCTLH (65 aa)). A JmjC domain is found at 242–401 (SHVESFKDGI…TQLNVVEIEH (160 aa)). Substrate is bound at residue threonine 294. Residues histidine 297 and aspartate 299 each contribute to the Fe cation site. Lysine 314 is a substrate binding site. Residue histidine 369 coordinates Fe cation.

This sequence belongs to the JHDM1 histone demethylase family. Requires Fe(2+) as cofactor.

It localises to the nucleus. It catalyses the reaction N(6),N(6)-dimethyl-L-lysyl(36)-[histone H3] + 2 2-oxoglutarate + 2 O2 = L-lysyl(36)-[histone H3] + 2 formaldehyde + 2 succinate + 2 CO2. Its function is as follows. Histone demethylase that specifically demethylates 'Lys-36' of histone H3, thereby playing a central role in histone code. The chain is JmjC domain-containing histone demethylation protein 1 (JHD1) from Kluyveromyces lactis (strain ATCC 8585 / CBS 2359 / DSM 70799 / NBRC 1267 / NRRL Y-1140 / WM37) (Yeast).